We begin with the raw amino-acid sequence, 167 residues long: MGVKRSLQSGGILLSLVANVLMVLSTATNYWTRQQEGHSGLWQECNHGICSSIPCQTTLAVTVACMVLAVGVGVVGMVMGLRIRCDEGESLRGQTTSAFLFLGGLLLLTALIGYTVKNAWKNNVFFSWSYFSGWLALPFSILAGFCFLLADMIMQSTDAISGFPVCL.

Helical transmembrane passes span 7–27, 59–79, 96–116, and 134–154; these read LQSG…LSTA, LAVT…GMVM, TSAF…GYTV, and WLAL…DMIM.

Belongs to the PMP-22/EMP/MP20 family.

It is found in the membrane. The protein is Claudin domain-containing protein 2 (CLDND2) of Homo sapiens (Human).